We begin with the raw amino-acid sequence, 651 residues long: MIVFATILFGALSAEDPDVEKLDSQEFQRAVEERAFALGPEDHAPAGGEGQGAAGHRELRHPVGRAPSGGAGSDLEPGPLKVYDESQKVTGLLKPEGGGEPREFEYSYPEGYDIARVLNEANIPFTTDPQTAGPWARAIAVMAPFVLILLLFFLMTRTGRSASQSSRMTDFGKSRARRMTKDQPKVTFADVAGADEAVQELTEIKEFLENPQKFQKLGARIPKGALLVGPPGTGKTLLARAVAGEAGVPFFSISGSDFVEMFVGVGASRVRDLFEQAKQNSPCIIFVDEIDAVGRQRGAGLGGGHDEREQTLNQLLVEMDGFDSKSGIIMLAATNRPDILDPALLRPGRFDRQIVVDRPDLPGRIKILKVHTRGKPLGEDVDIETIARGTPGFTGADLANLVNEAALLAARHNKEQIEMAEMEEAIDRVIAGPERKTRLISEKEKEITAYHEAGHAIVGALLPEADPVHKVTIIPRGQALGVTMSLPEEDRFMMSRAQLMAQLSYMLGGRAAERVVFEEITTGASNDIERATKVARQMVTRYGMSEKLGLIALGQHDGQVFMGRDLHAQPDYSDEIAFQIDKEIRRLVDEAYDTAEDLLVRNRRLLEKLASDLIEYETVDAEHLRRLVEEYAVDEHPSRGRPAMSVNGHRG.

The Extracellular portion of the chain corresponds to 1-134 (MIVFATILFG…FTTDPQTAGP (134 aa)). The helical transmembrane segment at 135-155 (WARAIAVMAPFVLILLLFFLM) threads the bilayer. The Cytoplasmic segment spans residues 156 to 651 (TRTGRSASQS…PAMSVNGHRG (496 aa)). 229–236 (GPPGTGKT) is a binding site for ATP. His451 provides a ligand contact to Zn(2+). Glu452 is an active-site residue. Residues His455 and Asp527 each coordinate Zn(2+).

This sequence in the central section; belongs to the AAA ATPase family. It in the C-terminal section; belongs to the peptidase M41 family. As to quaternary structure, homohexamer. It depends on Zn(2+) as a cofactor.

It is found in the cell membrane. Its function is as follows. Acts as a processive, ATP-dependent zinc metallopeptidase for both cytoplasmic and membrane proteins. Plays a role in the quality control of integral membrane proteins. This Rubrobacter xylanophilus (strain DSM 9941 / JCM 11954 / NBRC 16129 / PRD-1) protein is ATP-dependent zinc metalloprotease FtsH.